A 364-amino-acid chain; its full sequence is Large ribosomal subunit protein bL27m (364 aa).

The N-terminal 19 residues, 1 to 19 (MFSSSWQQVPKFVVQQVRT), are a transit peptide targeting the mitochondrion.

Belongs to the bacterial ribosomal protein bL27 family.

The protein resides in the mitochondrion. In terms of biological role, component of the large subunit of mitochondrial ribosome. In Kluyveromyces lactis (strain ATCC 8585 / CBS 2359 / DSM 70799 / NBRC 1267 / NRRL Y-1140 / WM37) (Yeast), this protein is Large ribosomal subunit protein bL27m (MRPL2).